The sequence spans 120 residues: Large ribosomal subunit protein uL18 (120 aa).

This sequence belongs to the universal ribosomal protein uL18 family. As to quaternary structure, part of the 50S ribosomal subunit; part of the 5S rRNA/L5/L18/L25 subcomplex. Contacts the 5S and 23S rRNAs.

Its function is as follows. This is one of the proteins that bind and probably mediate the attachment of the 5S RNA into the large ribosomal subunit, where it forms part of the central protuberance. The protein is Large ribosomal subunit protein uL18 of Rhodopseudomonas palustris (strain BisB5).